We begin with the raw amino-acid sequence, 318 residues long: GTP cyclohydrolase MptA (318 aa).

The protein belongs to the GTP cyclohydrolase IV family. As to quaternary structure, homodimer. Requires Fe(2+) as cofactor.

It catalyses the reaction GTP + H2O = 7,8-dihydroneopterin 2',3'-cyclic phosphate + formate + diphosphate + H(+). It participates in cofactor biosynthesis; 5,6,7,8-tetrahydromethanopterin biosynthesis. Functionally, converts GTP to 7,8-dihydro-D-neopterin 2',3'-cyclic phosphate, the first intermediate in the biosynthesis of coenzyme methanopterin. The sequence is that of GTP cyclohydrolase MptA from Methanothermobacter thermautotrophicus (strain ATCC 29096 / DSM 1053 / JCM 10044 / NBRC 100330 / Delta H) (Methanobacterium thermoautotrophicum).